Here is a 443-residue protein sequence, read N- to C-terminus: Thymidine phosphorylase (443 aa).

The protein belongs to the thymidine/pyrimidine-nucleoside phosphorylase family. As to quaternary structure, homodimer.

The catalysed reaction is thymidine + phosphate = 2-deoxy-alpha-D-ribose 1-phosphate + thymine. It participates in pyrimidine metabolism; dTMP biosynthesis via salvage pathway; dTMP from thymine: step 1/2. In terms of biological role, the enzymes which catalyze the reversible phosphorolysis of pyrimidine nucleosides are involved in the degradation of these compounds and in their utilization as carbon and energy sources, or in the rescue of pyrimidine bases for nucleotide synthesis. This Shewanella halifaxensis (strain HAW-EB4) protein is Thymidine phosphorylase.